Reading from the N-terminus, the 902-residue chain is Chloride channel protein 2 (902 aa).

Residues Met-1–Val-89 lie on the Cytoplasmic side of the membrane. The segment at Gln-18–Ala-36 is essential for channel gating by both voltage and cell volume. Thr-22 is modified (phosphothreonine). A modulates channel gating by both voltage and cell volume region spans residues Glu-38–Trp-51. The next 2 helical transmembrane spans lie at Gly-90 to Trp-123 and Ile-132 to Leu-157. A Selectivity filter part_1 motif is present at residues Gly-163–Pro-167. The helical intramembrane region spans Ile-166–Leu-173. 2 helical membrane passes run Leu-182 to Ser-200 and Glu-207 to Leu-225. The Selectivity filter part_2 signature appears at Gly-205 to Pro-209. Intramembrane regions (helical) lie at residues Met-241 to Cys-253 and Pro-257 to Ile-265. A run of 5 helical transmembrane segments spans residues Tyr-277–Trp-297, Leu-323–Met-351, Phe-360–Leu-379, Ala-431–Ala-451, and Gly-459–Trp-482. Residues Gly-459 to Pro-463 carry the Selectivity filter part_3 motif. The helical intramembrane region spans Gly-499–Val-513. An intramembrane region (note=Loop between two helices) is located at residues Thr-514–His-515. The segment at residues Thr-516–Thr-527 is an intramembrane region (helical). Residues Gly-528–His-532 constitute an intramembrane region (note=Loop between two helices). The helical transmembrane segment at Ile-533 to Leu-550 threads the bilayer. Over Gln-551 to Gln-902 the chain is Cytoplasmic. Residues Met-586–Ala-644 form the CBS 1 domain. Residues Arg-648–Cys-748 are disordered. 2 stretches are compositionally biased toward polar residues: residues Pro-671–Asp-683 and Ser-706–Met-719. Residues Ile-794–Val-854 enclose the CBS 2 domain. The Basolateral membrane sorting signature appears at Leu-816–Leu-817. The interval Ser-860–Gln-902 is disordered.

This sequence belongs to the chloride channel (TC 2.A.49) family. ClC-2/CLCN2 subfamily. In terms of assembly, homodimer. Interacts with auxiliary subunit HEPACAM.

The protein localises to the cell membrane. It localises to the basolateral cell membrane. It is found in the cell projection. Its subcellular location is the dendritic spine membrane. The protein resides in the axon. It carries out the reaction chloride(in) = chloride(out). It catalyses the reaction thiocyanate(in) = thiocyanate(out). The catalysed reaction is bromide(in) = bromide(out). The enzyme catalyses nitrate(in) = nitrate(out). It carries out the reaction iodide(out) = iodide(in). With respect to regulation, common gate kinetics are down-regulated by intracellular ATP. Inhibited by AK-42, a derivative of meclofenamate. Inhibited by Cd(2+). Inhibited by Zn(2+) and PKC activation. Inhibited at acidic pH. CCLN2:HEPACAM channel conductance is up-regulated upon hypo-osmolarity. Functionally, voltage-gated and osmosensitive chloride channel. Forms a homodimeric channel where each subunit has its own ion conduction pathway. Conducts double-barreled currents controlled by two types of gates, two fast glutamate gates that control each subunit independently and a slow common gate that opens and shuts off both subunits simultaneously. Displays inward rectification currents activated upon membrane hyperpolarization and extracellular hypotonicity. Contributes to chloride conductance involved in neuron excitability. In hippocampal neurons, generates a significant part of resting membrane conductance and provides an additional chloride efflux pathway to prevent chloride accumulation in dendrites upon GABA receptor activation. In glia, associates with the auxiliary subunit HEPACAM/GlialCAM at astrocytic processes and myelinated fiber tracts where it may regulate transcellular chloride flux buffering extracellular chloride and potassium concentrations. Regulates aldosterone production in adrenal glands. The opening of CLCN2 channels at hyperpolarized membrane potentials in the glomerulosa causes cell membrane depolarization, activation of voltage-gated calcium channels and increased expression of aldosterone synthase, the rate-limiting enzyme for aldosterone biosynthesis. Contributes to chloride conductance in retinal pigment epithelium involved in phagocytosis of shed photoreceptor outer segments and photoreceptor renewal. Conducts chloride currents at the basolateral membrane of epithelial cells with a role in chloride reabsorption rather than secretion. Permeable to small monovalent anions with chloride &gt; thiocyanate &gt; bromide &gt; nitrate &gt; iodide ion selectivity. The polypeptide is Chloride channel protein 2 (CLCN2) (Cavia porcellus (Guinea pig)).